A 242-amino-acid chain; its full sequence is Potassium/proton antiporter CemA (242 aa).

The next 2 helical transmembrane spans lie at 116–136 (IIFC…YSIL) and 200–220 (ISGF…YLIF).

It belongs to the CemA family.

Its subcellular location is the plastid. The protein resides in the chloroplast inner membrane. It carries out the reaction K(+)(in) + H(+)(out) = K(+)(out) + H(+)(in). Contributes to K(+)/H(+) antiport activity by supporting proton efflux to control proton extrusion and homeostasis in chloroplasts in a light-dependent manner to modulate photosynthesis. Prevents excessive induction of non-photochemical quenching (NPQ) under continuous-light conditions. Indirectly promotes efficient inorganic carbon uptake into chloroplasts. The polypeptide is Potassium/proton antiporter CemA (Chloranthus spicatus (Chulantree)).